We begin with the raw amino-acid sequence, 69 residues long: U2-agatoxin-Ao1o (69 aa).

Residues 1–20 (MKAIISLLLISAMVFSMFEA) form the signal peptide. Residues 21 to 34 (VPVRRRFTAFEGER) constitute a propeptide that is removed on maturation. 3 disulfide bridges follow: Cys-36–Cys-52, Cys-43–Cys-57, and Cys-51–Cys-67. Leu-68 carries the post-translational modification Leucine amide.

Belongs to the neurotoxin 01 (U2-agtx) family. In terms of tissue distribution, expressed by the venom gland.

The protein resides in the secreted. Its function is as follows. Insect active toxin causing rapid but reversible paralysis in crickets. No activity shown in mammals. Does not show effect on mammalian voltage-gated calcium channels. This chain is U2-agatoxin-Ao1o, found in Agelena orientalis (Funnel-web spider).